The primary structure comprises 623 residues: Bifunctional dihydrofolate reductase-thymidylate synthase (623 aa).

The DHFR domain occupies 9 to 237; it reads DIYAICACCK…TTLDFLVYSK (229 aa). 13-14 provides a ligand contact to substrate; the sequence is IC. Residues Ala15 and 38-44 contribute to the NADP(+) site; that span reads GLGNKGT. Asp53 is a substrate binding site. Tandem repeats lie at residues 88–91, 94–97, and 100–103. Residues 88 to 103 are 3 X 4 AA repeats of G-G-D-N; sequence GGDNTSGGDNTHGGDN. Residues 115-117, 137-139, and Asp153 each bind NADP(+); these read RSS and SKT. Residues Ile173, Tyr179, and Thr194 each coordinate substrate. 174–181 provides a ligand contact to NADP(+); the sequence is GGAQVYRE. The segment at 263-309 is disordered; it reads TAMRRNVAPRTAAPPMGPHSRANGERAPPRARARRTTPRQRKTTSCT. A compositionally biased stretch (basic residues) spans 291–304; the sequence is PRARARRTTPRQRK. A thymidylate synthase region spans residues 337 to 623; that stretch reads QHPEYQYLGI…HDKITMEMAA (287 aa). Arg360 is a dUMP binding site. Cys505 is an active-site residue. DUMP-binding positions include His506, 524 to 528, Asn536, and 566 to 568; these read QRSCD and HVY.

It in the N-terminal section; belongs to the dihydrofolate reductase family. The protein in the C-terminal section; belongs to the thymidylate synthase family. As to quaternary structure, homodimer.

It catalyses the reaction (6S)-5,6,7,8-tetrahydrofolate + NADP(+) = 7,8-dihydrofolate + NADPH + H(+). The enzyme catalyses dUMP + (6R)-5,10-methylene-5,6,7,8-tetrahydrofolate = 7,8-dihydrofolate + dTMP. It functions in the pathway cofactor biosynthesis; tetrahydrofolate biosynthesis; 5,6,7,8-tetrahydrofolate from 7,8-dihydrofolate: step 1/1. Functionally, bifunctional enzyme. Involved in de novo dTMP biosynthesis. Key enzyme in folate metabolism. Catalyzes an essential reaction for de novo glycine and purine synthesis, DNA precursor synthesis, and for the conversion of dUMP to dTMP. The chain is Bifunctional dihydrofolate reductase-thymidylate synthase from Plasmodium vivax.